A 197-amino-acid chain; its full sequence is Histidine biosynthesis bifunctional protein HisIE (197 aa).

Residues 1–108 (MMTLYPVVVQ…RFEETGSPTF (108 aa)) form a phosphoribosyl-AMP cyclohydrolase region. The segment at 109 to 197 (WLELYRLVRK…VMRELEKRRK (89 aa)) is phosphoribosyl-ATP pyrophosphohydrolase.

In the N-terminal section; belongs to the PRA-CH family. The protein in the C-terminal section; belongs to the PRA-PH family.

Its subcellular location is the cytoplasm. The catalysed reaction is 1-(5-phospho-beta-D-ribosyl)-ATP + H2O = 1-(5-phospho-beta-D-ribosyl)-5'-AMP + diphosphate + H(+). It catalyses the reaction 1-(5-phospho-beta-D-ribosyl)-5'-AMP + H2O = 1-(5-phospho-beta-D-ribosyl)-5-[(5-phospho-beta-D-ribosylamino)methylideneamino]imidazole-4-carboxamide. It participates in amino-acid biosynthesis; L-histidine biosynthesis; L-histidine from 5-phospho-alpha-D-ribose 1-diphosphate: step 2/9. Its pathway is amino-acid biosynthesis; L-histidine biosynthesis; L-histidine from 5-phospho-alpha-D-ribose 1-diphosphate: step 3/9. The sequence is that of Histidine biosynthesis bifunctional protein HisIE (hisI) from Thermotoga maritima (strain ATCC 43589 / DSM 3109 / JCM 10099 / NBRC 100826 / MSB8).